The sequence spans 206 residues: Flavin reductase (NADPH) (206 aa).

NADP(+) is bound by residues Gly10, Thr12, Gly13, Thr15, Arg35, Ser38, and Arg39. A Phosphoserine modification is found at Ser42. Residues Asp54, Val55, Leu75, and Gly76 each coordinate NADP(+). Position 82 is a phosphoserine (Ser82). NADP(+) contacts are provided by Met87, Cys109, His132, His153, and Ile154. The active-site S-nitroso-cysteine intermediate; for S-nitroso-CoA-dependent nitrosyltransferase activity is Cys109. Cys188 functions as the S-nitroso-cysteine intermediate; for S-nitroso-CoA-dependent nitrosyltransferase activity in the catalytic mechanism.

Belongs to the BLVRB family. As to quaternary structure, monomer.

It is found in the cytoplasm. It carries out the reaction reduced riboflavin + NADP(+) = riboflavin + NADPH + 2 H(+). The catalysed reaction is bilirubin IXbeta + NADP(+) = biliverdin IXbeta + NADPH + H(+). It catalyses the reaction FMNH2 + NAD(+) = FMN + NADH + 2 H(+). The enzyme catalyses FMNH2 + NADP(+) = FMN + NADPH + 2 H(+). It carries out the reaction S-nitroso-CoA + L-cysteinyl-[protein] = S-nitroso-L-cysteinyl-[protein] + CoA. The catalysed reaction is L-cysteinyl-[SCAN] + S-nitroso-CoA = S-nitroso-L-cysteinyl-[SCAN] + CoA. It catalyses the reaction S-nitroso-L-cysteinyl-[SCAN] + L-cysteinyl-[protein] = L-cysteinyl-[SCAN] + S-nitroso-L-cysteinyl-[protein]. Functionally, enzyme that can both act as a NAD(P)H-dependent reductase and a S-nitroso-CoA-dependent nitrosyltransferase. Promotes fetal heme degradation during development. Also expressed in adult tissues, where it acts as a regulator of hematopoiesis, intermediary metabolism (glutaminolysis, glycolysis, TCA cycle and pentose phosphate pathway) and insulin signaling. Has a broad specificity oxidoreductase activity by catalyzing the NAD(P)H-dependent reduction of a variety of flavins, such as riboflavin, FAD or FMN, biliverdins, methemoglobin and PQQ (pyrroloquinoline quinone). Contributes to fetal heme catabolism by catalyzing reduction of biliverdin IXbeta into bilirubin IXbeta in the liver. Biliverdin IXbeta, which constitutes the major heme catabolite in the fetus is not present in adult. Does not reduce bilirubin IXalpha. Can also reduce the complexed Fe(3+) iron to Fe(2+) in the presence of FMN and NADPH. Acts as a protein nitrosyltransferase by catalyzing nitrosylation of cysteine residues of target proteins, such as HMOX2, INSR and IRS1. S-nitroso-CoA-dependent nitrosyltransferase activity is mediated via a 'ping-pong' mechanism: BLVRB first associates with both S-nitroso-CoA and protein substrate, nitric oxide group is then transferred from S-nitroso-CoA to Cys-109 and Cys-188 residues of BLVRB and from S-nitroso-BLVRB to the protein substrate. Inhibits insulin signaling by mediating nitrosylation of INSR and IRS1, leading to their inhibition. The protein is Flavin reductase (NADPH) (Blvrb) of Mus musculus (Mouse).